The sequence spans 511 residues: Probable G-protein coupled receptor 101 (511 aa).

At 1 to 35 (MPPSCTNSTQENNGSRVCLPLSKMPISVAHGIIRS) the chain is on the extracellular side. N-linked (GlcNAc...) asparagine glycosylation is found at N7 and N13. A helical transmembrane segment spans residues 36–56 (VVLLVILGVAFLGNVVLGYVL). Residues 57–67 (HRKPNLLQVTN) lie on the Cytoplasmic side of the membrane. Residues 68–90 (RFIFNLLVTDLLQVALVAPWVVS) traverse the membrane as a helical segment. Topologically, residues 91 to 106 (TAIPFFWPLNIHFCTA) are extracellular. C104 and C182 form a disulfide bridge. Residues 107-127 (LVSLTHLFAFASVNTIVVVSV) form a helical membrane-spanning segment. The Cytoplasmic portion of the chain corresponds to 128 to 149 (DRYLTIIHPLSYPSKMTNRRSY). Residues 150–170 (ILLYGTWIAAFLQSTPPLYGW) traverse the membrane as a helical segment. Residues 171-196 (GHATFDDRNAFCSMIWGASPAYTVVS) are Extracellular-facing. A helical membrane pass occupies residues 197–217 (VVSFLVIPLGVMIACYSVVFG). Residues 218–398 (AARRQQALLY…PPCYECKAAR (181 aa)) lie on the Cytoplasmic side of the membrane. Basic and acidic residues predominate over residues 240–261 (DSVVHENEEGAKKRDEFQDKNE). 2 disordered regions span residues 240–315 (DSVV…EVSN) and 367–386 (EAMR…TSDP). Residues 376–385 (PPSRRNSTSD) are compositionally biased toward polar residues. Residues 399-419 (VIFVIISTYVLSLGPYCFLAV) form a helical membrane-spanning segment. The Extracellular segment spans residues 420–432 (LAVWVDIDTRVPQ). Residues 433–453 (WVITIIIWLFFLQCCIHPYVY) form a helical membrane-spanning segment. At 454-511 (GYMHKSIKKEIQEVLKKLICKKSPPVEDSHPDLHETEAGTEGGIEGKAVPSHDSATSP) the chain is on the cytoplasmic side. Positions 476–511 (SPPVEDSHPDLHETEAGTEGGIEGKAVPSHDSATSP) are disordered. Over residues 477–490 (PPVEDSHPDLHETE) the composition is skewed to basic and acidic residues.

The protein belongs to the G-protein coupled receptor 1 family. As to expression, expressed in the brain in hypothalamus.

It is found in the cell membrane. In terms of biological role, orphan receptor. The protein is Probable G-protein coupled receptor 101 (Gpr101) of Mus musculus (Mouse).